A 634-amino-acid chain; its full sequence is Replication protein E1 (634 aa).

The Nuclear localization signal motif lies at 84 to 86; the sequence is KRK. A Phosphoserine; by host modification is found at serine 90. Polar residues predominate over residues 91 to 115; that stretch reads QNSPLQDITNQSNSQQSTDEVNNLQ. The interval 91–128 is disordered; the sequence is QNSPLQDITNQSNSQQSTDEVNNLQAKRRAVDSVPDSG. The tract at residues 172-338 is DNA-binding region; the sequence is AQASSVTKIC…QTQLEHSFED (167 aa). The SF3 helicase domain maps to 437–587; it reads VNFIYFLQVL…FPFDSNGNPV (151 aa). 463–470 provides a ligand contact to ATP; it reads GPPNTGKS.

It belongs to the papillomaviridae E1 protein family. As to quaternary structure, can form hexamers. Interacts with E2 protein; this interaction increases E1 DNA binding specificity. Interacts with host DNA polymerase subunit POLA2. Interacts with host single stranded DNA-binding protein RPA1. Interacts with host TOP1; this interaction stimulates the enzymatic activity of TOP1. Phosphorylated.

Its subcellular location is the host nucleus. The enzyme catalyses Couples ATP hydrolysis with the unwinding of duplex DNA by translocating in the 3'-5' direction.. It catalyses the reaction ATP + H2O = ADP + phosphate + H(+). Its function is as follows. ATP-dependent DNA 3'-5' helicase required for initiation of viral DNA replication. It forms a complex with the viral E2 protein. The E1-E2 complex binds to the replication origin which contains binding sites for both proteins. During the initial step, a dimer of E1 interacts with a dimer of protein E2 leading to a complex that binds the viral origin of replication with high specificity. Then, a second dimer of E1 displaces the E2 dimer in an ATP-dependent manner to form the E1 tetramer. Following this, two E1 monomers are added to each half of the site, which results in the formation of two E1 trimers on the viral ori. Subsequently, two hexamers will be created. The double hexamer acts as a bi-directional helicase machinery and unwinds the viral DNA and then recruits the host DNA polymerase to start replication. This chain is Replication protein E1, found in Human papillomavirus 69.